A 382-amino-acid chain; its full sequence is MKITRLTTYHAAPRWLFLKVETDEGITGWGEPVIEGRARSVEAAVHELAGYVVGKDPARINDLWQTMYRAGFYRGGAILMSAIAGIDQALWDIKGKALGVPVYELLGGLVRDRMKTYRWVGGDRPGAIIAQINDYRALGFDTFKFNGTEEMKLIDSARAVDAAVVKVAEIRETFGNSIDFGIDFHGRVGAPMAKALLRELEPFKPLFVEEPVLAEQAEYYPRLAASTCIPLAAGERMFSRFEFKNVLCAGGIGMVQPDLSHAGGITECVKIAAMAEAYDVGFAPHCPLGPIALAACLHVDFVSHNAVLQEQSIGIHYNEGADLLDYVINKEDFHCVDGSIAALPKPGLGVEINEDMLKRANENPPDWRNPVWRHADGSIAEW.

Asp-183 provides a ligand contact to Mg(2+). The Proton donor role is filled by His-185. Residues Glu-209 and Glu-235 each coordinate Mg(2+). Catalysis depends on His-285, which acts as the Proton acceptor.

It belongs to the mandelate racemase/muconate lactonizing enzyme family. GalD subfamily. Mg(2+) serves as cofactor.

The enzyme catalyses D-galactonate = 2-dehydro-3-deoxy-D-galactonate + H2O. It participates in carbohydrate acid metabolism; D-galactonate degradation; D-glyceraldehyde 3-phosphate and pyruvate from D-galactonate: step 1/3. Catalyzes the dehydration of D-galactonate to 2-keto-3-deoxy-D-galactonate. This Xanthomonas campestris pv. campestris (strain 8004) protein is D-galactonate dehydratase.